We begin with the raw amino-acid sequence, 270 residues long: Probable septum site-determining protein MinC (270 aa).

It belongs to the MinC family. Interacts with MinD and FtsZ.

Its function is as follows. Cell division inhibitor that blocks the formation of polar Z ring septums. Rapidly oscillates between the poles of the cell to destabilize FtsZ filaments that have formed before they mature into polar Z rings. Prevents FtsZ polymerization. The protein is Probable septum site-determining protein MinC of Cupriavidus necator (strain ATCC 17699 / DSM 428 / KCTC 22496 / NCIMB 10442 / H16 / Stanier 337) (Ralstonia eutropha).